Here is a 710-residue protein sequence, read N- to C-terminus: DNA-directed RNA polymerase III subunit RPC5 (710 aa).

The span at 146–155 (DAKHREREAA) shows a compositional bias: basic and acidic residues. The tract at residues 146–169 (DAKHREREAANEAGDSSQDEAEED) is disordered. Phosphoserine occurs at positions 161 and 162. Residue Lys-171 forms a Glycyl lysine isopeptide (Lys-Gly) (interchain with G-Cter in SUMO2) linkage. At Ser-192 the chain carries Phosphoserine. Tyr-224 is modified (phosphotyrosine). A Glycyl lysine isopeptide (Lys-Gly) (interchain with G-Cter in SUMO2) cross-link involves residue Lys-432. Lys-498 is covalently cross-linked (Glycyl lysine isopeptide (Lys-Gly) (interchain with G-Cter in SUMO1); alternate). Lys-498 participates in a covalent cross-link: Glycyl lysine isopeptide (Lys-Gly) (interchain with G-Cter in SUMO2); alternate. A disordered region spans residues 498–526 (KEEPLSEEEADGAELEAEEEEPMDTAPST). Over residues 502–520 (LSEEEADGAELEAEEEEPM) the composition is skewed to acidic residues. Ser-503 is subject to Phosphoserine. A required for Pol III complex stability region spans residues 558 to 710 (NPVACELKAF…MWYLKGTVQS (153 aa)). Lys-661 participates in a covalent cross-link: Glycyl lysine isopeptide (Lys-Gly) (interchain with G-Cter in SUMO2).

Component of the RNA polymerase III complex consisting of at least 17 subunits: a ten-subunit horseshoe-shaped catalytic core composed of POLR3A/RPC1, POLR3B/RPC2, POLR1C/RPAC1, POLR1D/RPAC2, POLR3K/RPC10, POLR2E/RPABC1, POLR2F/RPABC2, POLR2H/RPABC3, POLR2K/RPABC4 and POLR2L/RPABC5; the stalk composed of two subunits POLR3H/RPC8 and CRCP/RPC9, forming a structural mobile part that protrudes out of the core and functions primarily in transcription initiation; and additional subunits homologous to general transcription factors of the RNA polymerase II machinery, POLR3D/RPC4-POLR3E/RPC5 heterodimer and POLR3/CRPC3-POLR3F/RPC6-POLR3G/RPC7 heterotrimer.

It is found in the nucleus. DNA-dependent RNA polymerase catalyzes the transcription of DNA into RNA using the four ribonucleoside triphosphates as substrates. Specific peripheric component of RNA polymerase III (Pol III) which synthesizes small non-coding RNAs including 5S rRNA, snRNAs, tRNAs and miRNAs from at least 500 distinct genomic loci. Assembles with POLR3D/RPC4 forming a subcomplex that binds the Pol III core. Enables recruitment of Pol III at transcription initiation site and drives transcription initiation from both type 2 and type 3 DNA promoters. Required for efficient transcription termination and reinitiation. Plays a key role in sensing and limiting infection by intracellular bacteria and DNA viruses. Acts as a nuclear and cytosolic DNA sensor involved in innate immune response. Can sense non-self dsDNA that serves as template for transcription into dsRNA. The non-self RNA polymerase III transcripts, such as Epstein-Barr virus-encoded RNAs (EBERs) induce type I interferon and NF-kappa-B through the RIG-I pathway. This chain is DNA-directed RNA polymerase III subunit RPC5, found in Mus musculus (Mouse).